Here is a 148-residue protein sequence, read N- to C-terminus: Sec-independent protein translocase protein TatB (148 aa).

Residues 1–21 (MFGISFSELLLVGLVALLVLG) traverse the membrane as a helical segment. Positions 85–148 (EPTPVEHVGE…NDTTQPPRAP (64 aa)) are disordered. Positions 107–148 (APAVAPTESAPVVAPASVEHVAQTAAPTTPAPNDTTQPPRAP) are enriched in low complexity.

It belongs to the TatB family. In terms of assembly, the Tat system comprises two distinct complexes: a TatABC complex, containing multiple copies of TatA, TatB and TatC subunits, and a separate TatA complex, containing only TatA subunits. Substrates initially bind to the TatABC complex, which probably triggers association of the separate TatA complex to form the active translocon.

The protein resides in the cell inner membrane. Functionally, part of the twin-arginine translocation (Tat) system that transports large folded proteins containing a characteristic twin-arginine motif in their signal peptide across membranes. Together with TatC, TatB is part of a receptor directly interacting with Tat signal peptides. TatB may form an oligomeric binding site that transiently accommodates folded Tat precursor proteins before their translocation. This is Sec-independent protein translocase protein TatB from Pseudomonas fluorescens (strain Pf0-1).